A 104-amino-acid chain; its full sequence is Flagellar hook-basal body complex protein FliE (104 aa).

It belongs to the FliE family.

The protein resides in the bacterial flagellum basal body. In Salmonella newport (strain SL254), this protein is Flagellar hook-basal body complex protein FliE.